We begin with the raw amino-acid sequence, 136 residues long: Ribonuclease YqgF (136 aa).

It belongs to the YqgF nuclease family. In terms of assembly, monomer; also forms low amounts of dimers. Requires Mn(2+) as cofactor.

It is found in the cytoplasm. Functionally, has robust sequence-specific RNase activity, acting as a 5'-3' exo/endonuclease on ssRNA substrates with minimally 3 consecutive adenine bases. Has no detectable nuclease activity on dsRNA, dsDNA or Holliday junction DNA. This Deinococcus radiodurans (strain ATCC 13939 / DSM 20539 / JCM 16871 / CCUG 27074 / LMG 4051 / NBRC 15346 / NCIMB 9279 / VKM B-1422 / R1) protein is Ribonuclease YqgF.